The chain runs to 316 residues: Olfactory receptor 8J1 (316 aa).

Topologically, residues 1 to 25 are extracellular; the sequence is MAPENFTRVTEFILTGVSSCPELQI. Residue N5 is glycosylated (N-linked (GlcNAc...) asparagine). The helical transmembrane segment at 26–46 threads the bilayer; the sequence is PLFLVFLVLYGLTMAGNLGII. Topologically, residues 47 to 54 are cytoplasmic; it reads TLTSVDSR. The helical transmembrane segment at 55–75 threads the bilayer; sequence LQTPMYFFLQHLALINLGNST. Residues 76 to 99 lie on the Extracellular side of the membrane; the sequence is VIAPKMLINFLVKKKTTSFYECAT. C97 and C189 form a disulfide bridge. A helical membrane pass occupies residues 100-120; the sequence is QLGGFLFFIVSEVIMLALMAY. Residues 121–139 are Cytoplasmic-facing; that stretch reads DRYVAICNPLLYMVVVSRR. The chain crosses the membrane as a helical span at residues 140–160; sequence LCLLLVSLTYLYGFSTAIVVS. Residues 161-197 lie on the Extracellular side of the membrane; the sequence is SYVFSVSYCSSNIINHFYCDNVPLLALSCSDTYLPET. A helical membrane pass occupies residues 198 to 217; it reads VVFISAATNVVGSLIIVLVS. Residues 218–237 are Cytoplasmic-facing; it reads YFNIVLSILKICSSEGRKKA. Residues 238–258 traverse the membrane as a helical segment; sequence FSTCASHMMAVTIFYGTLLFM. At 259–272 the chain is on the extracellular side; it reads YVQPRSNHSLDTDD. A helical membrane pass occupies residues 273-293; it reads KMASVFYTLVIPMLNPLIYSL. Residues 294-316 lie on the Cytoplasmic side of the membrane; that stretch reads RNKDVKTALQRFMTNLCYSFKTM.

It belongs to the G-protein coupled receptor 1 family.

It localises to the cell membrane. In terms of biological role, odorant receptor. This is Olfactory receptor 8J1 (OR8J1) from Homo sapiens (Human).